The chain runs to 58 residues: Mesomartoxin (58 aa).

A signal peptide spans 1–29 (MMSRLSVFILIALVLSVIIDVLNNSKVEG). Disulfide bonds link Cys31–Cys49, Cys35–Cys54, and Cys39–Cys56.

This sequence belongs to the short scorpion toxin superfamily. Potassium channel inhibitor family. Alpha-KTx 26 subfamily. As to expression, expressed by the venom gland.

It is found in the secreted. Functionally, recombinant toxin that reversibly blocks the voltage-gated potassium channels Shaker (IC(50)=0.054 nM), rKv1.2/KCNA2 (IC(50)=15.6 nM), and rKv1.3/KCNA3 (IC(50)=12.5 uM). In Olivierus martensii (Manchurian scorpion), this protein is Mesomartoxin.